We begin with the raw amino-acid sequence, 226 residues long: MKSLLPISSLLVLLGSASVSAADLNIPMSFEYLALDGKKVESSVFNHKSSLELAPGTHKVAIRYHEMVEDDFSDSQTFVKSSPFIVTLEVDGDHQYYLQAAEGKVVKKPKVFAQNPQVVLTRADKGQVNYQVTNTNIEEESFVSRLFSGNQAVDVSGTAATATGVAVAATPAPTSAQVAVSATATTSPTDASKATGANPQQMLQYWWLQADEKTRKEFMSWAISQL.

The first 21 residues, 1-21, serve as a signal peptide directing secretion; the sequence is MKSLLPISSLLVLLGSASVSA.

It belongs to the UPF0319 family.

The chain is UPF0319 protein SO_1816 from Shewanella oneidensis (strain ATCC 700550 / JCM 31522 / CIP 106686 / LMG 19005 / NCIMB 14063 / MR-1).